An 80-amino-acid polypeptide reads, in one-letter code: Saposin-B-Val (80 aa).

The Saposin B-type domain maps to 1-80; it reads GDVCQDCIQM…CGLVGFCEEV (80 aa). Intrachain disulfides connect Cys4/Cys77, Cys7/Cys71, and Cys36/Cys47. Asn21 carries N-linked (GlcNAc...) (complex) asparagine glycosylation.

Saposin-B is a homodimer. Interacts with GRN; facilitates lysosomal delivery of progranulin from the extracellular space and the biosynthetic pathway. In terms of processing, the one residue extended Saposin-B-Val is only found in a minority of the chains.

In terms of biological role, saposin-B stimulates the hydrolysis of galacto-cerebroside sulfate by arylsulfatase A (EC 3.1.6.8), GM1 gangliosides by beta-galactosidase (EC 3.2.1.23) and globotriaosylceramide by alpha-galactosidase A (EC 3.2.1.22). Saposin-B forms a solubilizing complex with the substrates of the sphingolipid hydrolases. In Sus scrofa (Pig), this protein is Saposin-B-Val (PSAP).